Consider the following 500-residue polypeptide: MRMPTGSELWPIAIFTIIFLLLVDLMHRRQRWTSRYPPGPVPWPVLGNLLQIDFQNMPAGFQKLRCRFGDLFSLQLAFESVVVLNGLPALREALVKYSEDTADRPPLHFNDQSGFGPRSQGVVLARYGPAWRQQRRFSVSTFRHFGLGKKSLEQWVTEEARCLCAAFADHSGFPFSPNTLLDKAVCNVIASLLFACRFEYNDPRFIRLLDLLKDTLEEESGFLPMLLNVFPMLLHIPGLLGKVFSGKKAFVAMLDELLTEHKVTWDPAQPPRDLTDAFLAEVEKAKGNPESSFNDENLRVVVADLFMAGMVTTSTTLTWALLFMILRPDVQCRVQQEIDEVIGQVRRPEMADQARMPFTNAVIHEVQRFADILPLGVPHKTSRDIEVQGFLIPKGTTLIINLSSVLKDETVWEKPLRFHPEHFLDAQGNFVKHEAFMPFSAGRRACLGEPLARMELFLFFTCLLQRFSFSVPAGQPRPSNYGVFGALTTPRPYQLCASPR.

Position 446 (Cys-446) interacts with heme.

The protein belongs to the cytochrome P450 family. It depends on heme as a cofactor. As to expression, brain.

It is found in the endoplasmic reticulum membrane. The protein resides in the microsome membrane. The enzyme catalyses an organic molecule + reduced [NADPH--hemoprotein reductase] + O2 = an alcohol + oxidized [NADPH--hemoprotein reductase] + H2O + H(+). Functionally, cytochromes P450 are a group of heme-thiolate monooxygenases. In liver microsomes, this enzyme is involved in an NADPH-dependent electron transport pathway. It oxidizes a variety of structurally unrelated compounds, including steroids, fatty acids, and xenobiotics. The polypeptide is Cytochrome P450 2D4 (Cyp2d4) (Rattus norvegicus (Rat)).